The chain runs to 66 residues: Cocaine- and amphetamine-regulated transcript protein (66 aa).

Disulfide bonds link Cys34–Cys52 and Cys40–Cys60.

The protein belongs to the CART family.

The protein resides in the secreted. Satiety factor closely associated with the actions of leptin and neuropeptide y; this anorectic peptide inhibits both normal and starvation-induced feeding and completely blocks the feeding response induced by neuropeptide Y and regulated by leptin in the hypothalamus. This chain is Cocaine- and amphetamine-regulated transcript protein (CARTPT), found in Sus scrofa (Pig).